The following is a 508-amino-acid chain: Bifunctional purine biosynthesis protein PurH (508 aa).

One can recognise an MGS-like domain in the interval 1 to 145 (MTKRALISVS…KNHQYVTVIV (145 aa)).

It belongs to the PurH family.

It carries out the reaction (6R)-10-formyltetrahydrofolate + 5-amino-1-(5-phospho-beta-D-ribosyl)imidazole-4-carboxamide = 5-formamido-1-(5-phospho-D-ribosyl)imidazole-4-carboxamide + (6S)-5,6,7,8-tetrahydrofolate. It catalyses the reaction IMP + H2O = 5-formamido-1-(5-phospho-D-ribosyl)imidazole-4-carboxamide. Its pathway is purine metabolism; IMP biosynthesis via de novo pathway; 5-formamido-1-(5-phospho-D-ribosyl)imidazole-4-carboxamide from 5-amino-1-(5-phospho-D-ribosyl)imidazole-4-carboxamide (10-formyl THF route): step 1/1. It participates in purine metabolism; IMP biosynthesis via de novo pathway; IMP from 5-formamido-1-(5-phospho-D-ribosyl)imidazole-4-carboxamide: step 1/1. This chain is Bifunctional purine biosynthesis protein PurH, found in Lysinibacillus sphaericus (strain C3-41).